Consider the following 882-residue polypeptide: MWFVFRPAAIPALLLTLGVSALSPLRPLVSTAGQHEVIPGWYLQSERHVSSSIFSLSFPGADVSSWYRMGPRGTVMAGLLENGVYNETHLFFSDNFKSLPDADFRDVSWLYREEFTLQPGSGQHFTLHTHGISSRGDIYLNGHRVASKDVQAGSYAGYQYDVTKHVLKGGNCLLIKAYPTNYLRDLALGFVDWNPYPPDNGTGIWRHVELSQSGPIRLSSPRVTTDFVPGVRVNDTNLTVKTDVHNIGQETIRGSIKGFIEGAQNQRQPISAPFTLKPGEQQTIEMNTTIQNPSVWWPASWGDQPLYTARISAFVGKIKSDGPKRRKFGIRHIESRVNDQDTVEFKVNGKPFFVMGAGYSSDIFLRFTVERITTIFQYVLDMGMNTVRLEGKQEHPELYDIADKMGIMIISGWECCDHWEGWKYNTEGFGQPWTDVDYPIANSSMLHEARMMQTHPSILAFLIGSDYWPNDQATNIYVDALRRMDWNAAIISSAAKRGFPKLLGPSGMKMDGPYDWVPPSYWFGDRLGAAGAGGFGSELGSGVGTPEIRSLKKFLSEEDMKDLWTKPNKVLYHMSAGVSQFRDRSIYNKALYARYGKPNSLDDYSLKAQLMDYEATRSEYEAYAAYKSHSNPTTGLIYWMLNPAWPNLHWALFDYYLKPMASYFGTKTGARIEHAIYDYREQAVYLINHSNSRSGARSVTVDLINIDGKSLSHSTMKADTTPLMSQKLSKVSGLDKNRDVSFLRLILKDDAGKVLSRNVYWLPQREDVLDWGNSTWYHTPVTEYADLTPLSKLRKADVRVDINIQGRTKTRVSLQNKSNHPAFFIRLNLLDKASGDEVTPVFWEDNYVTLWPHERIELGVTYPQTHRVELEVSGYNVEKKMV.

An N-terminal signal peptide occupies residues 1–21 (MWFVFRPAAIPALLLTLGVSA). The propeptide occupies 22–31 (LSPLRPLVST). N-linked (GlcNAc...) asparagine glycosylation is found at Asn-86, Asn-200, Asn-234, Asn-237, Asn-287, and Asn-442. The active-site Proton donor is Asp-466. Glu-538 acts as the Nucleophile in catalysis. Residues Asn-688, Asn-773, and Asn-816 are each glycosylated (N-linked (GlcNAc...) asparagine).

It belongs to the glycosyl hydrolase 2 family. In terms of assembly, monomer.

The protein resides in the secreted. The catalysed reaction is Hydrolysis of chitosan or chitosan oligosaccharides to remove successive D-glucosamine residues from the non-reducing termini.. Its function is as follows. Hydrolyzes chitosan and chitooligosaccharides with retention of anomeric configuration. This chain is Exo-beta-D-glucosaminidase ARB_07888, found in Arthroderma benhamiae (strain ATCC MYA-4681 / CBS 112371) (Trichophyton mentagrophytes).